The chain runs to 363 residues: Isopentenyl-diphosphate delta-isomerase (363 aa).

6-7 is a binding site for substrate; that stretch reads RK. FMN contacts are provided by residues 64–66, Ser94, and Asn123; that span reads AMT. Gln153 contacts substrate. Glu154 is a binding site for Mg(2+). Residues Lys185, Ser210, Thr215, 259–261, and 280–281 each bind FMN; these read GVR and SA.

The protein belongs to the IPP isomerase type 2 family. As to quaternary structure, homooctamer. Dimer of tetramers. Mg(2+) serves as cofactor. FMN is required as a cofactor. The cofactor is NADPH.

It localises to the cytoplasm. The catalysed reaction is isopentenyl diphosphate = dimethylallyl diphosphate. Functionally, involved in the biosynthesis of isoprenoids. Catalyzes the 1,3-allylic rearrangement of the homoallylic substrate isopentenyl (IPP) to its allylic isomer, dimethylallyl diphosphate (DMAPP). This chain is Isopentenyl-diphosphate delta-isomerase, found in Streptomyces sp. (strain CL190).